Consider the following 384-residue polypeptide: Dehydrogenase ALT3 (384 aa).

It belongs to the iron-containing alcohol dehydrogenase family. The cofactor is Fe cation.

Its pathway is mycotoxin biosynthesis. Functionally, dehydrogenase; part of the gene cluster that mediates the biosynthesis of the host-selective toxins (HSTs) AAL-toxins, sphinganine-analog mycotoxins responsible for Alternaria stem canker on tomato by the tomato pathotype. The biosynthesis starts with the polyketide synthase ALT1-catalyzed C-16 carbon chain assembly from one starter acetyl-CoA unit with malonyl-CoA extender units. ALT1 also selectively transfers methyl groups at the first and the third cycle of chain elongation for AAL toxin. The C-16 polyketide chain is released from the enzyme by a nucleophilic attack of a carbanion, which is derived from R-carbon of glycin by decarboxylation, on the carbonyl carbon of polyketide acyl chain. This step is probably catalyzed by a pyridoxal 5'-phosphate-dependent aminoacyl transferase ALT4. The respective functions of the other enzymes encoded by the cluster have still to be elucidated. The sphingosine N-acyltransferase-like protein ALT7 seems not to act as a resistance/self-tolerance factor against the toxin in the toxin biosynthetic gene cluster, contrary to what is expected. This is Dehydrogenase ALT3 from Alternaria alternata (Alternaria rot fungus).